A 184-amino-acid polypeptide reads, in one-letter code: Protein GrpE (184 aa).

Belongs to the GrpE family. In terms of assembly, homodimer.

Its subcellular location is the cytoplasm. Its function is as follows. Participates actively in the response to hyperosmotic and heat shock by preventing the aggregation of stress-denatured proteins, in association with DnaK and GrpE. It is the nucleotide exchange factor for DnaK and may function as a thermosensor. Unfolded proteins bind initially to DnaJ; upon interaction with the DnaJ-bound protein, DnaK hydrolyzes its bound ATP, resulting in the formation of a stable complex. GrpE releases ADP from DnaK; ATP binding to DnaK triggers the release of the substrate protein, thus completing the reaction cycle. Several rounds of ATP-dependent interactions between DnaJ, DnaK and GrpE are required for fully efficient folding. This chain is Protein GrpE, found in Pseudomonas putida (strain GB-1).